The sequence spans 129 residues: uncharacterized protein (129 aa).

Disordered regions lie at residues 1–57 (MGGG…LPNH) and 87–129 (PVSS…WLWW). A compositionally biased stretch (basic and acidic residues) spans 10–20 (SGEERREKRSG). Low complexity predominate over residues 87-99 (PVSSSPSRSPSSS).

This is an uncharacterized protein from Homo sapiens (Human).